The following is a 354-amino-acid chain: Neutral protease 2 homolog SNOG_02177 (354 aa).

The signal sequence occupies residues 1 to 19 (MKFQILSVAALASLASAVS). Positions 20 to 182 (DALDKRDSPL…WIDLAKRTIV (163 aa)) are excised as a propeptide. 2 cysteine pairs are disulfide-bonded: Cys186–Cys257 and Cys264–Cys282. N-linked (GlcNAc...) asparagine glycosylation is present at Asn214. A Zn(2+)-binding site is contributed by His306. Glu307 is a catalytic residue. Position 310 (His310) interacts with Zn(2+).

The protein belongs to the peptidase M35 family. Zn(2+) serves as cofactor.

It localises to the secreted. The catalysed reaction is Preferential cleavage of bonds with hydrophobic residues in P1'. Also 3-Asn-|-Gln-4 and 8-Gly-|-Ser-9 bonds in insulin B chain.. In terms of biological role, secreted metalloproteinase that allows assimilation of proteinaceous substrates. Shows high activities on basic nuclear substrates such as histone and protamine. The sequence is that of Neutral protease 2 homolog SNOG_02177 from Phaeosphaeria nodorum (strain SN15 / ATCC MYA-4574 / FGSC 10173) (Glume blotch fungus).